Here is a 246-residue protein sequence, read N- to C-terminus: Putative 4'-phosphopantetheinyl transferase slr0495 (246 aa).

Residues Asp-110 and Glu-156 each coordinate Mg(2+).

Belongs to the P-Pant transferase superfamily. Gsp/Sfp/HetI/AcpT family. Requires Mg(2+) as cofactor.

Its function is as follows. Probably transfers the 4'-phosphopantetheine moiety from coenzyme A (CoA) to a serine residue of a carrier protein domain. The chain is Putative 4'-phosphopantetheinyl transferase slr0495 from Synechocystis sp. (strain ATCC 27184 / PCC 6803 / Kazusa).